A 362-amino-acid polypeptide reads, in one-letter code: MPGKQSEDKPMEVSTVEDGGDEGLGGLTVEELQQGQEAALALEDMMALSAQTLVQTEVEELYEEVRPLGQGRFGRVLLVTHRQKGTPLALKQLPKQSTSLRGFLYEFCVGLSLGTHSAIVTAYGIGIESANSYSFLTEPVLHGDLITFIQPKVGLPQPAAQRCAAQLASALEHIHSHGLVYRDLKPENVLVCDPACQRVKLTDFGHTRPRGTLLRLTGPPIPYTAPELCAPPPLPEGLPIQPSLDAWALGVLIFCLLTGYFPWDQPLVEVDPFFEDFLIWQASGQPQDRPQPWYSLSPAADTLLWGLLDPHPRKRNPVGSIKSYLGQPWKQREGEAEELATELREDGWRGGQEAAKGEQPAC.

Residues 1 to 11 show a composition bias toward basic and acidic residues; that stretch reads MPGKQSEDKPM. The segment at 1–26 is disordered; the sequence is MPGKQSEDKPMEVSTVEDGGDEGLGG. One can recognise a Protein kinase domain in the interval 62–330; it reads YEEVRPLGQG…IKSYLGQPWK (269 aa). Residues 68–76 and Lys91 each bind ATP; that span reads LGQGRFGRV. The active-site Proton acceptor is the Asp183. Positions 329-362 are disordered; sequence WKQREGEAEELATELREDGWRGGQEAAKGEQPAC.

Belongs to the protein kinase superfamily. Ser/Thr protein kinase family. STKL subfamily.

It catalyses the reaction L-seryl-[protein] + ATP = O-phospho-L-seryl-[protein] + ADP + H(+). The enzyme catalyses L-threonyl-[protein] + ATP = O-phospho-L-threonyl-[protein] + ADP + H(+). The polypeptide is Serine/threonine-protein kinase SBK2 (Sbk2) (Mus musculus (Mouse)).